A 702-amino-acid chain; its full sequence is Elongation factor G (702 aa).

Residues Cys-8–Asn-290 enclose the tr-type G domain. GTP is bound by residues Ala-17 to Thr-24, Asp-88 to His-92, and Asn-142 to Asp-145.

This sequence belongs to the TRAFAC class translation factor GTPase superfamily. Classic translation factor GTPase family. EF-G/EF-2 subfamily.

The protein resides in the cytoplasm. Its function is as follows. Catalyzes the GTP-dependent ribosomal translocation step during translation elongation. During this step, the ribosome changes from the pre-translocational (PRE) to the post-translocational (POST) state as the newly formed A-site-bound peptidyl-tRNA and P-site-bound deacylated tRNA move to the P and E sites, respectively. Catalyzes the coordinated movement of the two tRNA molecules, the mRNA and conformational changes in the ribosome. The protein is Elongation factor G of Buchnera aphidicola subsp. Schizaphis graminum (strain Sg).